Here is an 874-residue protein sequence, read N- to C-terminus: MKVSDIRSKFLQFFESKGHTVVRSSSLVPANDPTLLFTNSGMVQFKDVFLGTDKRPYTRATSAQRSVRAGGKHNDLENVGYTARHHTFFEMLGNFSFGDYFKRDAILYAWELLTKTYQLPAEKLWVTVYAEDDEAYDIWAKEVGVPAERIVRIGDNKGARYASDNFWQMADTGPCGPCSEIFYDHGPDVWGGPPGSPEEDGDRYIEVWNLVFMQFNRDEQGNMTPLPKPCVDTGMGLERIAAVLQHVHSNYEIDLFQALIKAAARETHIDNLNQNSLKVIADHIRACSFLIVDGVIPGNEGRGYVLRRIIRRAIRHGYKLGQKTPFFHKMVADLVEQMGQAYPELAEAQSRVTEVLKAEEERFFETIENGMSILDAALADLKLKGGKTLDGELAFKLHDTFGFPLDLTQDVCREQEIGVDEAAFDAAMNRQREQARAAGKFKMAAGLEYTGDKTVFHGYEKLELPQARVTALYVDGAAVNAMQPGQTGVVVLDNTPFYAESGGQAGDQGVLKAGNAVFAVTDTTKIQADVFGHQGTLEGGALKVGDAVSAQVDAQRRARTVRNHSATHLMHKALREVLGSHVQQKGSLVDADKTRFDFSHNAALTDEQIRRVEEIVNAEILRNDDTHAEIMPFDDAVKSGAMALFGEKYADDVRVLSIGTSKELCGGTHVHRTGDIGLFKIVVEGGVAAGIRRVEAITGDNALHYLQGLDARLNEAAAVLKAQPSELVPRIGQVQDQVRALEKELERLKSKLAASQGDELAAQAVDIKGLKVLAAQLDGADVKTLRETMDKLKDKLKSAAIVLGAVSDGKVSLIAGVTADATGKVKAGELVNFVAQQVGGKGGGRPDMAQAGGTEPAKLPQALAGVGEWVAGKI.

4 residues coordinate Zn(2+): His-564, His-568, Cys-665, and His-669.

Belongs to the class-II aminoacyl-tRNA synthetase family. The cofactor is Zn(2+).

Its subcellular location is the cytoplasm. The enzyme catalyses tRNA(Ala) + L-alanine + ATP = L-alanyl-tRNA(Ala) + AMP + diphosphate. In terms of biological role, catalyzes the attachment of alanine to tRNA(Ala) in a two-step reaction: alanine is first activated by ATP to form Ala-AMP and then transferred to the acceptor end of tRNA(Ala). Also edits incorrectly charged Ser-tRNA(Ala) and Gly-tRNA(Ala) via its editing domain. The protein is Alanine--tRNA ligase of Cupriavidus necator (strain ATCC 17699 / DSM 428 / KCTC 22496 / NCIMB 10442 / H16 / Stanier 337) (Ralstonia eutropha).